A 131-amino-acid polypeptide reads, in one-letter code: Arsenate reductase (131 aa).

Catalysis depends on nucleophile residues Cys-10, Cys-82, and Cys-89. 2 disulfide bridges follow: Cys-10-Cys-82 and Cys-82-Cys-89.

The protein belongs to the low molecular weight phosphotyrosine protein phosphatase family. Thioredoxin-coupled ArsC subfamily.

The protein localises to the cytoplasm. The catalysed reaction is arsenate + [thioredoxin]-dithiol + H(+) = arsenite + [thioredoxin]-disulfide + H2O. Its function is as follows. Catalyzes the reduction of arsenate [As(V)] to arsenite [As(III)]. The polypeptide is Arsenate reductase (Staphylococcus aureus (strain N315)).